The chain runs to 324 residues: Aprataxin (324 aa).

Residues 23–72 (SVTLGRGPDTKIKDKKCSREQVELRADCNRGFVTVKQLGVNPTLVDDVVV) enclose the FHA-like domain. A disordered region spans residues 100–160 (TEDTSRSKPS…QGLKASMQDP (61 aa)). Polar residues predominate over residues 111–125 (RAQQIQSPTKTTADV). Residues 150–255 (SQGLKASMQD…ISQDFDSPCL (106 aa)) enclose the HIT domain. Interaction with DNA substrate regions lie at residues 175 to 179 (DKYPK) and 237 to 238 (SM). The short motif at 240–244 (HVHLH) is the Histidine triad motif element. Histidine 242 serves as the catalytic Tele-AMP-histidine intermediate. Residues 299–321 (LRCHVCGKEQTTIPKLKDHLKTH) form a C2H2-type zinc finger.

The protein resides in the nucleus. The protein localises to the nucleoplasm. It localises to the nucleolus. The catalysed reaction is a 5'-end adenosine-5'-diphospho-5'-2'-deoxyribonucleoside-DNA + H2O = a 5'-end 5'-phospho-2'-deoxyribonucleoside-DNA + AMP + 2 H(+). It catalyses the reaction a 5'-end adenosine-5'-diphospho-5'-ribonucleoside-2'-deoxyribonucleotide-DNA + H2O = a 5'-end 5'-phospho-ribonucleoside-2'-deoxyribonucleotide-DNA + AMP + 2 H(+). It carries out the reaction a 3'-end 2'-deoxyribonucleotide-3'-diphospho-5'-guanosine-DNA + H2O = a 3'-end 2'-deoxyribonucleotide 3'-phosphate-DNA + GMP + 2 H(+). Functionally, DNA-binding protein involved in single-strand DNA break repair, double-strand DNA break repair and base excision repair. Resolves abortive DNA ligation intermediates formed either at base excision sites, or when DNA ligases attempt to repair non-ligatable breaks induced by reactive oxygen species. Catalyzes the release of adenylate groups covalently linked to 5'-phosphate termini, resulting in the production of 5'-phosphate termini that can be efficiently rejoined. Also able to hydrolyze adenosine 5'-monophosphoramidate (AMP-NH(2)) and diadenosine tetraphosphate (AppppA), but with lower catalytic activity. Likewise, catalyzes the release of 3'-linked guanosine (DNAppG) and inosine (DNAppI) from DNA, but has higher specific activity with 5'-linked adenosine (AppDNA). The protein is Aprataxin (aptx) of Danio rerio (Zebrafish).